The following is a 79-amino-acid chain: Probable [Fe-S]-dependent transcriptional repressor (79 aa).

Iron-sulfur cluster is bound by residues cysteine 56, cysteine 61, cysteine 64, and cysteine 71.

Belongs to the FeoC family.

In terms of biological role, may function as a transcriptional regulator that controls feoABC expression. In Klebsiella pneumoniae (strain 342), this protein is Probable [Fe-S]-dependent transcriptional repressor.